Consider the following 263-residue polypeptide: (E)-2-((N-methylformamido)methylene)succinate hydrolase (263 aa).

The active-site Nucleophile is S96. Active-site residues include N120 and H241.

The protein belongs to the AB hydrolase superfamily. As to quaternary structure, monomer.

The catalysed reaction is (E)-2-((N-methylformamido) methylene)succinate + 2 H2O + H(+) = succinate semialdehyde + methylamine + formate + CO2. Involved in the degradation of the pyridine ring of trigonelline (TG; N-methylnicotinate) into succinate and methylamine as carbon and nitrogen sources, respectively. Catalyzes the hydrolysis of (E)-2-((N-methylformamido)methylene)succinate (MFMS) into formic acid, succinate semialdehyde (SSA), methylamine and carbon dioxide. This chain is (E)-2-((N-methylformamido)methylene)succinate hydrolase, found in Acinetobacter baylyi (strain ATCC 33305 / BD413 / ADP1).